Here is a 681-residue protein sequence, read N- to C-terminus: MGIPVHRVSLGDAWSSRMHPDMESERCAQSFSVERLTNILDGGAQHTALRRKVESIIHGNPQFSSKDNYFMSQNELYEAATRKRYHLQKIAQRMGWTEEGRELEYAHRALSADLNLNLQGIFLKALRSLGSEEQIAKWEPLGKTFQIISTYAQTELGHGTYLQGLETEATYDAATQEFVIHSPTVTATKWWPGDLGRSATHALILAQLICSGARRGMHAFIVPVRSLQDHTPLPGITIGDIGPKMGLQHIDNGFLKMDHVRVPRENMLSRFAQVLPDGAYIKLGTAQSNYLGMLVTRVHLLLGAILSPLQKACVIATRYSVIRHQCRLRPSDPEVKILEHQTQQQKLFPQLAMCYAFHFLATGLLEFFQQAYKNILDRDFTLLPELHALSTGTKAMMSDFCTQGAEQCRRACGGHGYSKLSGLPSLVTSVTASCTYEGENTVLYLQVARFLVKSCLQAQGFPGSTSQRSLPRSVSYLALPDLARCPAQTAADFFCPALYTAAWAHVAARLTKDSVHHLQALRQSGADEHEAWNQTTIIHLQAAKAHCYYISVKSFKEALEKLENEPAIQQVLKRLCDLHALHGILTNSGDFLHDGFLSGAQVDMARTAYMDLLPLIRKDAILLTDAFDFTDQCLNSALGCYDGNVYERLFEWAQRSPTNTQENPAYKKYIQPLLQSWRSNL.

S9 carries the post-translational modification Phosphoserine. An N6-succinyllysine mark is found at K66, K137, K453, K561, and K667. A Microbody targeting signal motif is present at residues 679–681 (SNL).

Belongs to the acyl-CoA oxidase family. In terms of assembly, homodimer. Requires FAD as cofactor. In terms of tissue distribution, liver and kidney.

The protein resides in the peroxisome. The enzyme catalyses (25R)-3alpha,7alpha,12alpha-trihydroxy-5beta-cholestan-26-oyl-CoA + A + H2O = (24R,25R)-3alpha,7alpha,12alpha,24-tetrahydroxy-5beta-cholestan-26-oyl-CoA + AH2. It carries out the reaction (25S)-3alpha,7alpha,12alpha-trihydroxy-5beta-cholestan-26-oyl-CoA + O2 = (24E)-3alpha,7alpha,12alpha-trihydroxy-5beta-cholest-24-en-26-oyl-CoA + H2O2. In terms of biological role, oxidizes the CoA esters of the bile acid intermediates di- and tri-hydroxycholestanoic acids. Capable of oxidizing short as well as long chain 2-methyl branched fatty acids. This is Peroxisomal acyl-coenzyme A oxidase 2 from Oryctolagus cuniculus (Rabbit).